Consider the following 414-residue polypeptide: Mannan endo-1,4-beta-mannosidase 3 (414 aa).

The signal sequence occupies residues 1–19 (MKCLCFVVLLAILIAQNSS). Asn17 and Asn75 each carry an N-linked (GlcNAc...) asparagine glycan. A substrate-binding site is contributed by Trp87. 2 N-linked (GlcNAc...) asparagine glycosylation sites follow: Asn133 and Asn153. Asn202 is a binding site for substrate. Glu203 functions as the Proton donor in the catalytic mechanism. Position 283 (Tyr283) interacts with substrate. Glu323 functions as the Nucleophile in the catalytic mechanism. An N-linked (GlcNAc...) asparagine glycan is attached at Asn343. A substrate-binding site is contributed by Trp365. The N-linked (GlcNAc...) asparagine glycan is linked to Asn386.

Belongs to the glycosyl hydrolase 5 (cellulase A) family. As to expression, expressed in leaves, flowers, siliques and seeds.

Its subcellular location is the secreted. It catalyses the reaction Random hydrolysis of (1-&gt;4)-beta-D-mannosidic linkages in mannans, galactomannans and glucomannans.. In Arabidopsis thaliana (Mouse-ear cress), this protein is Mannan endo-1,4-beta-mannosidase 3 (MAN3).